The following is a 363-amino-acid chain: Small ribosomal subunit biogenesis GTPase RsgA (363 aa).

Positions 112 to 268 constitute a CP-type G domain; the sequence is HQQVIAANID…LIDTPGMREL (157 aa). Residues 157 to 160 and 210 to 218 each bind GTP; these read TKAD and GSSGAGKST. Zn(2+) contacts are provided by cysteine 291, cysteine 296, histidine 298, and cysteine 304. Residues 340–363 are disordered; that stretch reads RVAQNNRGKGSGKRPASVDRPGRR.

It belongs to the TRAFAC class YlqF/YawG GTPase family. RsgA subfamily. Monomer. Associates with 30S ribosomal subunit, binds 16S rRNA. Zn(2+) is required as a cofactor.

It is found in the cytoplasm. One of several proteins that assist in the late maturation steps of the functional core of the 30S ribosomal subunit. Helps release RbfA from mature subunits. May play a role in the assembly of ribosomal proteins into the subunit. Circularly permuted GTPase that catalyzes slow GTP hydrolysis, GTPase activity is stimulated by the 30S ribosomal subunit. In Xanthomonas campestris pv. campestris (strain 8004), this protein is Small ribosomal subunit biogenesis GTPase RsgA.